Here is a 285-residue protein sequence, read N- to C-terminus: N(G),N(G)-dimethylarginine dimethylaminohydrolase 1 (285 aa).

Ala2 bears the N-acetylalanine mark. A substrate-binding site is contributed by Leu30. At Ser33 the chain carries Phosphoserine. Asp73, Glu78, Asp79, Arg98, and Arg145 together coordinate substrate. The active-site Proton donor is His173. Cys222 is modified (S-nitrosocysteine). Val268 lines the substrate pocket. At Cys274 the chain carries S-nitrosocysteine. Cys274 serves as the catalytic Nucleophile. A Zn(2+)-binding site is contributed by Cys274.

Belongs to the DDAH family. In terms of assembly, monomer. In terms of tissue distribution, detected in skeletal muscle, lung, heart, liver, kidney and brain (at protein level).

It catalyses the reaction N(omega),N(omega)-dimethyl-L-arginine + H2O = dimethylamine + L-citrulline. It carries out the reaction N(omega)-methyl-L-arginine + H2O = L-citrulline + methylamine. Inhibited by zinc ions. Its function is as follows. Hydrolyzes N(G),N(G)-dimethyl-L-arginine (ADMA) and N(G)-monomethyl-L-arginine (MMA) which act as inhibitors of NOS. Has therefore a role in the regulation of nitric oxide generation. This is N(G),N(G)-dimethylarginine dimethylaminohydrolase 1 (Ddah1) from Mus musculus (Mouse).